We begin with the raw amino-acid sequence, 404 residues long: Probable tRNA sulfurtransferase (404 aa).

The region spanning 60-165 (RSVIEALKPV…DEAAYLSHED (106 aa)) is the THUMP domain. ATP-binding positions include 183–184 (ML), 208–209 (HF), R265, G287, and Q296.

Belongs to the ThiI family.

The protein localises to the cytoplasm. It catalyses the reaction [ThiI sulfur-carrier protein]-S-sulfanyl-L-cysteine + a uridine in tRNA + 2 reduced [2Fe-2S]-[ferredoxin] + ATP + H(+) = [ThiI sulfur-carrier protein]-L-cysteine + a 4-thiouridine in tRNA + 2 oxidized [2Fe-2S]-[ferredoxin] + AMP + diphosphate. The catalysed reaction is [ThiS sulfur-carrier protein]-C-terminal Gly-Gly-AMP + S-sulfanyl-L-cysteinyl-[cysteine desulfurase] + AH2 = [ThiS sulfur-carrier protein]-C-terminal-Gly-aminoethanethioate + L-cysteinyl-[cysteine desulfurase] + A + AMP + 2 H(+). It participates in cofactor biosynthesis; thiamine diphosphate biosynthesis. In terms of biological role, catalyzes the ATP-dependent transfer of a sulfur to tRNA to produce 4-thiouridine in position 8 of tRNAs, which functions as a near-UV photosensor. Also catalyzes the transfer of sulfur to the sulfur carrier protein ThiS, forming ThiS-thiocarboxylate. This is a step in the synthesis of thiazole, in the thiamine biosynthesis pathway. The sulfur is donated as persulfide by IscS. In Streptococcus equi subsp. equi (strain 4047), this protein is Probable tRNA sulfurtransferase.